The primary structure comprises 665 residues: Filensin (665 aa).

Residues 1–40 form a head region; that stretch reads MYRRSYVFQTRKEQYEHADEASRAAEPERPADEGWAGATS. A Phosphoserine modification is found at serine 5. The IF rod domain maps to 40–320; sequence SLAALQGLGE…RIIEIEGNRL (281 aa). Residues 41 to 75 form a coil 1A region; that stretch reads LAALQGLGERVAAHVQRARALEQRHAGLRRQLDAF. Alanine 42 bears the N-acetylalanine mark. Residues 76-84 form a linker 1 region; sequence QRLGELAGP. Positions 85–184 are coil 1B; it reads EDALARQVES…RHKKNLLEVQ (100 aa). Positions 185–201 are linker 12; sequence TYISILQQIIHTTPPAS. Positions 202-320 are coil 2; it reads IVTSGMREEK…RIIEIEGNRL (119 aa). The segment at 321-665 is tail; sequence TSAFIETPIP…DKKKSGEKSS (345 aa). 2 positions are modified to phosphoserine: serine 341 and serine 420. Disordered regions lie at residues 410–439 and 506–614; these read SKFE…QISK and YDGQ…KGPP. Residue glycine 434 is the site of N-myristoyl glycine attachment. The residue at position 513 (serine 513) is a Phosphoserine. Positions 556 to 571 are enriched in basic and acidic residues; that stretch reads PEEKREGEERDEESRR. Serine 665 is modified (phosphoserine).

It belongs to the intermediate filament family. As to quaternary structure, part of a complex required for lens intermediate filament formation composed of BFSP1, BFSP2 and CRYAA. Identified in a complex that contains VIM, EZR, AHNAK, BFSP1, BFSP2, ANK2, PLEC, PRX and spectrin. Found in a complex composed of PPL (via C-terminal linker domain), BFSP1 and BFSP2 in the retinal lens. Within the complex interacts with BFSP2. Interacts (via C-terminus) with MIP (via C-terminus) in aged lens fiber cells. In terms of processing, proteolytically cleaved during lens cell fiber differentiation with increased fragmentation as fiber cell age increases. Post-translationally, myristoylated at Gly-434 following proteolytic cleavage at Asp-433. Acetylated at Ala-42 following proteolytic cleavage at Leu-41. Expressed in the cortex and nucleus of the retina lens (at protein level).

The protein localises to the cell membrane. It is found in the cytoplasm. The protein resides in the cytoskeleton. It localises to the cell cortex. In terms of biological role, required for the correct formation of lens intermediate filaments as part of a complex composed of BFSP1, BFSP2 and CRYAA. Involved in altering the calcium regulation of MIP water permeability. In Homo sapiens (Human), this protein is Filensin (BFSP1).